The primary structure comprises 459 residues: tRNA uridine(34) acetyltransferase (459 aa).

The radical S-adenosyl-L-methionine (rSAM) stretch occupies residues 1–278 (MKKLSRTISG…VPPYVRISRV (278 aa)). A Radical SAM core domain is found at 6-271 (RTISGVTPVA…IADIKALVPP (266 aa)). Residues cysteine 23, cysteine 27, and cysteine 30 each contribute to the [4Fe-4S] cluster site. Lysine 77 lines the acetyl-CoA pocket. The N-acetyltransferase stretch occupies residues 308 to 459 (QKCRCIRCRE…VAGYMCKHLD (152 aa)). Zn(2+) contacts are provided by cysteine 310, cysteine 312, and cysteine 315. Acetyl-CoA contacts are provided by residues 386-389 (ELHV), 409-411 (LGR), and tyrosine 442.

The protein belongs to the ELP3 family. Homodimer. [4Fe-4S] cluster is required as a cofactor.

The catalysed reaction is uridine(34) in tRNA + acetyl-CoA + S-adenosyl-L-methionine + H2O = 5-(carboxymethyl)uridine(34) in tRNA + 5'-deoxyadenosine + L-methionine + CoA + 2 H(+). It functions in the pathway tRNA modification. TRNA uridine(34) acetyltransferase, which mediates formation of carboxymethyluridine in the wobble base at position 34 in tRNAs. The proposed mechanism is the following: (i) recruits S-adenosyl-L-methionine and cleaves it to generate a 5'-deoxyadenosine radical (5'-dA) in the radical S-adenosyl-L-methionine (rSAM) region, (ii) hydrolyzes acetyl-CoA in the N-acetyltransferase domain and (iii) an acetyl radical is formed by the products of the two domains and (iv) is transferred onto the C5 position of uridine(34) in the bound tRNA molecule. Does not show protein lysine acetyltransferase activity. The protein is tRNA uridine(34) acetyltransferase of Dehalococcoides mccartyi (strain CBDB1).